Reading from the N-terminus, the 680-residue chain is MGRIKKKGTAGQAKNFITRTQAVRKLQISLPDFRKLCIWKGIYPREPRNKKKASKSSTHSTTFYYTKDIQWLLHEKIVDAFREQKALEKKISKALGRGDAHDAARLERNASRPEKTGKTKYNLDHIIRERYPTFIDALRDLDDCLSMLFLFANLPSTSTVPAKMIARCEKLCLEFEHYLIVSNSLRKSFLSIKGIYYQATIQGQDILWLVPYRFNQRVTGDVDFRIMGTFVEFYQTLLGFVNFRLYTSVGLVYPPKFDKARDDQDAGLGAFSLEGNGIGAIEQPKQITNGDASKPDPKLQAEIDKLMLQLNAPEKEAEETSKTSPDGEEEEQATETIDKFEPAAPGGDILMQPSYSATDPSTLFSKFTFFLSRETPRQSLEFILRAFGCKRIGWDAVLGEGAFTHNESDPSITHQVVDRPPMQVQPEEEEEIKEDNQTAQRLRPGARIPGRIYIQPQWIWDCINDEELKRPDLYAPGAQLPPHLSPFVKKVRGQYDPSAPLQDQEREDEELEMDSGSEDEADVSDDETAVKKQDPLTAMDVDETAEGMDVAGSDDESDEAPEKADESFGGFSEAEESEDEGETAALRRQRELEAELSGVALQEKEVDPRVKAKTDAKKKAAKKAKEEDEELERSKMMMSRKKRKILEKMVYSNKKKDAEAEALRAKRRKIEKSGKAAPRE.

The disordered stretch occupies residues 312 to 351 (APEKEAEETSKTSPDGEEEEQATETIDKFEPAAPGGDILM). The BRCT domain maps to 359 to 476 (DPSTLFSKFT…ELKRPDLYAP (118 aa)). Disordered stretches follow at residues 494-642 (QYDP…SRKK) and 654-680 (KKKD…APRE). Composition is skewed to acidic residues over residues 505–527 (ERED…SDDE), 540–559 (DVDE…ESDE), and 573–582 (EAEESEDEGE). Composition is skewed to basic and acidic residues over residues 602 to 626 (QEKE…KAKE), 654 to 664 (KKKDAEAEALR), and 671 to 680 (EKSGKAAPRE). A coiled-coil region spans residues 611–673 (KAKTDAKKKA…RAKRRKIEKS (63 aa)).

This sequence belongs to the pescadillo family. In terms of assembly, component of the NOP7 complex, composed of erb1, nop7 and ytm1. The complex is held together by erb1, which interacts with nop7 via its N-terminal domain and with ytm1 via a high-affinity interaction between the seven-bladed beta-propeller domains of the 2 proteins. The NOP7 complex associates with the 66S pre-ribosome.

It is found in the nucleus. The protein localises to the nucleolus. Its subcellular location is the nucleoplasm. Component of the NOP7 complex, which is required for maturation of the 25S and 5.8S ribosomal RNAs and formation of the 60S ribosome. The chain is Pescadillo homolog (nop7) from Sclerotinia sclerotiorum (strain ATCC 18683 / 1980 / Ss-1) (White mold).